The sequence spans 72 residues: Penaeidin-2d (72 aa).

Residues 1–21 form the signal peptide; the sequence is MRLVVCLVFLASFALVCQGGA. A Pyrrolidone carboxylic acid modification is found at Gln22. 3 disulfide bridges follow: Cys45–Cys59, Cys48–Cys66, and Cys60–Cys67. Residue Lys71 is modified to Lysine amide.

The protein belongs to the penaeidin family.

It localises to the cytoplasmic granule. Its function is as follows. Antibacterial and antifungal activity. Presents chitin-binding activity. This is Penaeidin-2d from Penaeus setiferus (Atlantic white shrimp).